A 154-amino-acid polypeptide reads, in one-letter code: Putative hydrogenase maturation protease MJ0253 (154 aa).

It belongs to the peptidase A31 family.

The protein is Putative hydrogenase maturation protease MJ0253 of Methanocaldococcus jannaschii (strain ATCC 43067 / DSM 2661 / JAL-1 / JCM 10045 / NBRC 100440) (Methanococcus jannaschii).